An 83-amino-acid chain; its full sequence is Short neurotoxin 1 (83 aa).

Residues 1–21 (MKTLLLTLVVVTIVCLDLGYT) form the signal peptide. Cystine bridges form between C24/C45, C38/C62, C64/C75, and C76/C81.

Belongs to the three-finger toxin family. Short-chain subfamily. Type I alpha-neurotoxin sub-subfamily. As to expression, expressed by the venom gland.

The protein resides in the secreted. In terms of biological role, binds to muscle nicotinic acetylcholine receptor (nAChR) and inhibit acetylcholine from binding to the receptor, thereby impairing neuromuscular transmission. The polypeptide is Short neurotoxin 1 (Pseudechis australis (Mulga snake)).